The sequence spans 148 residues: Large ribosomal subunit protein bL9 (148 aa).

It belongs to the bacterial ribosomal protein bL9 family.

Functionally, binds to the 23S rRNA. This is Large ribosomal subunit protein bL9 from Methylococcus capsulatus (strain ATCC 33009 / NCIMB 11132 / Bath).